Consider the following 390-residue polypeptide: MPININKFILDMERFDGTLKKYPEDFIVEEITPEGTVLEVGKEIGFEDVEKWHGSFIHFTVEKTNWNTMDALKQIVRATKTKRKNFGFAGTKDKFAVTTQRFGCFGLKKEQLENINIKDIVIRDVQKTNKKLRMGGLWGNKFTIKIRDLNLSEKEIKRISDLKLDYVLNYYGIQRFGLIRPITHIVGKFIYERDFESAFYTYCGTPINETGDSLEARQLVDMGEFKKALKLFNRGHDYEKRLIQQYLKYKDFKMAFTALPPQLNSMFVNAYQAYLFNEMINKRFDYGFDELEGDILEDNTPTGTLIGYDTKFSGGIQGEIEKEIVERENLDLKKFKIEDFGNFYGTRRKMVTPIYDFKSRFENEIFELSFKLERGNYATIVTREFTGNLS.

D93 serves as the catalytic Nucleophile. The 188-residue stretch at 166–353 (YVLNYYGIQR…YGTRRKMVTP (188 aa)) folds into the TRUD domain.

This sequence belongs to the pseudouridine synthase TruD family.

The catalysed reaction is uridine(13) in tRNA = pseudouridine(13) in tRNA. In terms of biological role, could be responsible for synthesis of pseudouridine from uracil-13 in transfer RNAs. The protein is Probable tRNA pseudouridine synthase D 2 of Methanococcus maripaludis (strain DSM 14266 / JCM 13030 / NBRC 101832 / S2 / LL).